The chain runs to 295 residues: Elongation factor Ts (295 aa).

The segment at threonine 80–valine 83 is involved in Mg(2+) ion dislocation from EF-Tu.

It belongs to the EF-Ts family.

It localises to the cytoplasm. Associates with the EF-Tu.GDP complex and induces the exchange of GDP to GTP. It remains bound to the aminoacyl-tRNA.EF-Tu.GTP complex up to the GTP hydrolysis stage on the ribosome. The sequence is that of Elongation factor Ts from Lysinibacillus sphaericus (strain C3-41).